The primary structure comprises 295 residues: UDP-3-O-acyl-N-acetylglucosamine deacetylase (295 aa).

Zn(2+) contacts are provided by histidine 75, histidine 232, and aspartate 236. Histidine 259 functions as the Proton donor in the catalytic mechanism.

It belongs to the LpxC family. Zn(2+) is required as a cofactor.

It catalyses the reaction a UDP-3-O-[(3R)-3-hydroxyacyl]-N-acetyl-alpha-D-glucosamine + H2O = a UDP-3-O-[(3R)-3-hydroxyacyl]-alpha-D-glucosamine + acetate. It functions in the pathway glycolipid biosynthesis; lipid IV(A) biosynthesis; lipid IV(A) from (3R)-3-hydroxytetradecanoyl-[acyl-carrier-protein] and UDP-N-acetyl-alpha-D-glucosamine: step 2/6. Its function is as follows. Catalyzes the hydrolysis of UDP-3-O-myristoyl-N-acetylglucosamine to form UDP-3-O-myristoylglucosamine and acetate, the committed step in lipid A biosynthesis. The sequence is that of UDP-3-O-acyl-N-acetylglucosamine deacetylase from Helicobacter pylori (strain J99 / ATCC 700824) (Campylobacter pylori J99).